A 621-amino-acid chain; its full sequence is Protein CASP (621 aa).

The Cytoplasmic segment spans residues 1–574; the sequence is MEIVSRAWES…ILATPKSRTV (574 aa). Coiled-coil stretches lie at residues 101 to 445 and 473 to 525; these read LLKG…VQDI and ILTS…FLQS. Residues 575–595 form a helical; Anchor for type IV membrane protein membrane-spanning segment; it reads FFSYLLILHALIMLVLYKFAF. Residues 596–621 are Lumenal-facing; it reads DQSVVRDAETECEYKFHQHMLDNHKQ.

The protein belongs to the CASP family.

Its subcellular location is the golgi apparatus membrane. Functionally, may be involved in intra-Golgi retrograde transport. In Caenorhabditis elegans, this protein is Protein CASP (ceh-44).